Here is a 219-residue protein sequence, read N- to C-terminus: Small ribosomal subunit protein uS4 (219 aa).

The S4 RNA-binding domain occupies 112–174; the sequence is RRLQTQVLRL…GSSPLMSESH (63 aa). The disordered stretch occupies residues 193–219; the sequence is KAAAEAKQARERPPERGGGRKKRGGRR. The segment covering 199–210 has biased composition (basic and acidic residues); the sequence is KQARERPPERGG.

This sequence belongs to the universal ribosomal protein uS4 family. In terms of assembly, part of the 30S ribosomal subunit. Contacts protein S5. The interaction surface between S4 and S5 is involved in control of translational fidelity.

One of the primary rRNA binding proteins, it binds directly to 16S rRNA where it nucleates assembly of the body of the 30S subunit. Functionally, with S5 and S12 plays an important role in translational accuracy. In Methanosarcina mazei (strain ATCC BAA-159 / DSM 3647 / Goe1 / Go1 / JCM 11833 / OCM 88) (Methanosarcina frisia), this protein is Small ribosomal subunit protein uS4.